The following is an 838-amino-acid chain: Protein translocase subunit SecA 1 (838 aa).

Residues Q85, 103–107 (GEGKT), and D493 contribute to the ATP site. C823, C825, C834, and H835 together coordinate Zn(2+).

Belongs to the SecA family. As to quaternary structure, monomer and homodimer. Part of the essential Sec protein translocation apparatus which comprises SecA, SecYEG and auxiliary proteins SecDF. Other proteins may also be involved. Zn(2+) is required as a cofactor.

Its subcellular location is the cell membrane. It is found in the cytoplasm. The catalysed reaction is ATP + H2O + cellular proteinSide 1 = ADP + phosphate + cellular proteinSide 2.. Functionally, part of the Sec protein translocase complex. Interacts with the SecYEG preprotein conducting channel. Has a central role in coupling the hydrolysis of ATP to the transfer of proteins into and across the cell membrane, serving as an ATP-driven molecular motor driving the stepwise translocation of polypeptide chains across the membrane. The chain is Protein translocase subunit SecA 1 from Streptococcus gordonii.